Consider the following 156-residue polypeptide: Small ribosomal subunit protein uS7 (156 aa).

This sequence belongs to the universal ribosomal protein uS7 family. Part of the 30S ribosomal subunit. Contacts proteins S9 and S11.

One of the primary rRNA binding proteins, it binds directly to 16S rRNA where it nucleates assembly of the head domain of the 30S subunit. Is located at the subunit interface close to the decoding center, probably blocks exit of the E-site tRNA. In Mycoplasma mobile (strain ATCC 43663 / 163K / NCTC 11711) (Mesomycoplasma mobile), this protein is Small ribosomal subunit protein uS7.